The following is a 400-amino-acid chain: Enolase (400 aa).

Residue Gln154 participates in (2R)-2-phosphoglycerate binding. Residue Glu197 is the Proton donor of the active site. The Mg(2+) site is built by Asp233, Glu274, and Asp301. (2R)-2-phosphoglycerate contacts are provided by Lys326, Arg355, Ser356, and Lys377. Lys326 acts as the Proton acceptor in catalysis.

The protein belongs to the enolase family. Mg(2+) is required as a cofactor.

Its subcellular location is the cytoplasm. It localises to the secreted. It is found in the cell surface. The catalysed reaction is (2R)-2-phosphoglycerate = phosphoenolpyruvate + H2O. It participates in carbohydrate degradation; glycolysis; pyruvate from D-glyceraldehyde 3-phosphate: step 4/5. Its function is as follows. Catalyzes the reversible conversion of 2-phosphoglycerate (2-PG) into phosphoenolpyruvate (PEP). It is essential for the degradation of carbohydrates via glycolysis. The polypeptide is Enolase (Picrophilus torridus (strain ATCC 700027 / DSM 9790 / JCM 10055 / NBRC 100828 / KAW 2/3)).